The primary structure comprises 166 residues: Small ribosomal subunit protein uS5 (166 aa).

The region spanning 12 to 75 (YIEKLVQVNR…EAARRNMIQV (64 aa)) is the S5 DRBM domain.

The protein belongs to the universal ribosomal protein uS5 family. In terms of assembly, part of the 30S ribosomal subunit. Contacts proteins S4 and S8.

Its function is as follows. With S4 and S12 plays an important role in translational accuracy. Located at the back of the 30S subunit body where it stabilizes the conformation of the head with respect to the body. This Pseudomonas savastanoi pv. phaseolicola (strain 1448A / Race 6) (Pseudomonas syringae pv. phaseolicola (strain 1448A / Race 6)) protein is Small ribosomal subunit protein uS5.